Reading from the N-terminus, the 283-residue chain is uncharacterized protein (283 aa).

This is an uncharacterized protein from Caenorhabditis elegans.